Here is a 179-residue protein sequence, read N- to C-terminus: Methylated-DNA--protein-cysteine methyltransferase, inducible (179 aa).

Cysteine 141 acts as the Nucleophile; methyl group acceptor in catalysis.

This sequence belongs to the MGMT family.

It catalyses the reaction a 6-O-methyl-2'-deoxyguanosine in DNA + L-cysteinyl-[protein] = S-methyl-L-cysteinyl-[protein] + a 2'-deoxyguanosine in DNA. The catalysed reaction is a 4-O-methyl-thymidine in DNA + L-cysteinyl-[protein] = a thymidine in DNA + S-methyl-L-cysteinyl-[protein]. Its function is as follows. Involved in the cellular defense against the biological effects of O6-methylguanine (O6-MeG) and O4-methylthymine (O4-MeT) in DNA. Repairs the methylated nucleobase in DNA by stoichiometrically transferring the methyl group to a cysteine residue in the enzyme. This is a suicide reaction: the enzyme is irreversibly inactivated. This Bacillus subtilis (strain 168) protein is Methylated-DNA--protein-cysteine methyltransferase, inducible (adaB).